The chain runs to 409 residues: 8-amino-7-oxononanoate synthase (409 aa).

R20 contributes to the substrate binding site. A pyridoxal 5'-phosphate-binding site is contributed by 116 to 117 (GY). Position 141 (H141) interacts with substrate. Pyridoxal 5'-phosphate-binding residues include S187, H215, and T243. Residue K246 is modified to N6-(pyridoxal phosphate)lysine. Residue T369 coordinates substrate.

It belongs to the class-II pyridoxal-phosphate-dependent aminotransferase family. BioF subfamily. Homodimer. Pyridoxal 5'-phosphate serves as cofactor.

The catalysed reaction is 6-carboxyhexanoyl-[ACP] + L-alanine + H(+) = (8S)-8-amino-7-oxononanoate + holo-[ACP] + CO2. Its pathway is cofactor biosynthesis; biotin biosynthesis. In terms of biological role, catalyzes the decarboxylative condensation of pimeloyl-[acyl-carrier protein] and L-alanine to produce 8-amino-7-oxononanoate (AON), [acyl-carrier protein], and carbon dioxide. The chain is 8-amino-7-oxononanoate synthase from Polaromonas naphthalenivorans (strain CJ2).